Here is a 143-residue protein sequence, read N- to C-terminus: Turripeptide VIII-01 (143 aa).

A signal peptide spans 1-23 (MALSLDILMSVTMVTAVLTTVNA). The propeptide occupies 24–32 (EYKDSRLDS).

In terms of processing, contains 4 disulfide bonds. Expressed by the venom duct.

It localises to the secreted. In Gemmula speciosa (Splendid gem-turris), this protein is Turripeptide VIII-01.